Consider the following 318-residue polypeptide: Melanoma-associated antigen 8 (318 aa).

The disordered stretch occupies residues 1–103; sequence MLLGQKSQRY…GPSTSPDPAH (103 aa). One can recognise an MAGE domain in the interval 112-311; the sequence is LDEKVAELVR…ISYPSLHEEA (200 aa).

Expressed in many tumors of several types, such as melanoma, head and neck squamous cell carcinoma, lung carcinoma and breast carcinoma, but not in normal tissues except for testis and placenta.

In terms of biological role, not known, though may play a role in embryonal development and tumor transformation or aspects of tumor progression. This Homo sapiens (Human) protein is Melanoma-associated antigen 8 (MAGEA8).